Here is a 210-residue protein sequence, read N- to C-terminus: Cell division protein SepF (210 aa).

Disordered stretches follow at residues 22 to 72 and 79 to 98; these read DYYE…FDDA and RGPR…RGST. Basic and acidic residues-rich tracts occupy residues 37 to 60 and 79 to 88; these read RPRE…REYD and RGPREFDRTP.

This sequence belongs to the SepF family. Homodimer. Interacts with FtsZ.

The protein resides in the cytoplasm. Functionally, cell division protein that is part of the divisome complex and is recruited early to the Z-ring. Probably stimulates Z-ring formation, perhaps through the cross-linking of FtsZ protofilaments. Its function overlaps with FtsA. The polypeptide is Cell division protein SepF (Mycolicibacterium vanbaalenii (strain DSM 7251 / JCM 13017 / BCRC 16820 / KCTC 9966 / NRRL B-24157 / PYR-1) (Mycobacterium vanbaalenii)).